Consider the following 365-residue polypeptide: G-protein coupled receptor 68 (365 aa).

Over 1-12 the chain is Extracellular; sequence MGNITTENSSLS. 2 N-linked (GlcNAc...) asparagine glycosylation sites follow: Asn-3 and Asn-8. The helical transmembrane segment at 13–49 threads the bilayer; that stretch reads CPIDHTIHQTLAPVVYVTVLVVGFPANCLSLYFGYLQ. 2 disulfides stabilise this stretch: Cys-13–Cys-258 and Cys-94–Cys-172. The Cytoplasmic portion of the chain corresponds to 50-53; sequence IKAR. Residues 54–84 form a helical membrane-spanning segment; sequence NELGVYLCNLTIADLFYICSLPFWLQYVLQH. The Extracellular portion of the chain corresponds to 85-89; it reads DDWSH. A helical transmembrane segment spans residues 90–125; sequence GDLSCQVCGILLYENIYISVGFLCCISIDRYLAVAH. Residues 126–133 lie on the Cytoplasmic side of the membrane; it reads PFRFHQFR. The helical transmembrane segment at 134–160 threads the bilayer; that stretch reads TLKAAVGVSVLIWAKELLTSIYFLNHK. Topologically, residues 161–176 are extracellular; sequence EVIEDEDQHRVCFEHY. Residues 161–176 are extracellular loop 2 (ECL2); it reads EVIEDEDQHRVCFEHY. The chain crosses the membrane as a helical span at residues 177–214; that stretch reads PIQAWQRSINYYRFLVGFLFPICLLLASYQGILRAVRR. Residues 215-218 are Cytoplasmic-facing; the sequence is SHGT. A helical transmembrane segment spans residues 219 to 254; the sequence is QKSRKDQIQRLVLSTVVIFLACFLPYHVLLLVRSLW. Residues 255 to 260 lie on the Extracellular side of the membrane; that stretch reads ERNCEF. Residues 261–289 traverse the membrane as a helical segment; it reads AKSIFNVYHFSLLLTSFNCVADPVLYCFV. Over 290 to 365 the chain is Cytoplasmic; it reads SETTHRDLAR…VGGPSTVGLA (76 aa).

This sequence belongs to the G-protein coupled receptor 1 family. As to expression, expressed in the lung, testis, heart, brain, spleen, thymus, brown fat, small intestine, colon, peripheral blood leukocytes, macrophages, stomach, ovary and white fat but not in the liver, kidney, and skeletal muscle. Expression in the prostate is weak but detectable. Specifically expressed in endothelial cells of small-diameter resistance arteries.

The protein localises to the cell membrane. Activated by a network of residues that connects an extracellular-facing cavity to Glu-149, a conserved charged residue buried in the transmembrane core of the receptor. Protonation likely drives conformational changes in extracellular loop 2 (ECL2), which stabilizes movement of transmembrane 3 (TM3) and a series of rearrangements that connect the extracellular-facing cavity to Glu-149, a residue only conserved in proton-sensing G-protein coupled receptors. Activated in an allosteric manner by divalent metal ions at the extracellular surface following the order: Cd(2+) &gt; Co(2+) &gt; Ni(2+) &gt; Zn(2+) &gt; Fe(2+) &gt; Ca(2+) &gt; Mg(2+). Activated by ogerin (ZINC67740571), a selective GPR68 positive allosteric modulator. Inhibited by small molecule GPR68-I, decreasing inflammation in models of colitis. Proton-sensing G-protein coupled receptor activated by extracellular pH, which is required to monitor pH changes and generate adaptive reactions. The receptor is almost silent at pH 7.8 but fully activated at pH 6.8. Ligand binding causes a conformation change that triggers signaling via guanine nucleotide-binding proteins (G proteins) and modulates the activity of downstream effectors, such as phospholipase C. GPR68 is mainly coupled to G(q) G proteins and mediates production of diacylglycerol (DAG) and inositol 1,4,5-trisphosphate (IP3). Acts as a key mechanosensor of fluid shear stress and membrane stretch. Expressed in endothelial cells of small-diameter resistance arteries, where it mediates flow-induced dilation in response to shear stress. May represents an osteoblastic pH sensor regulating cell-mediated responses to acidosis in bone. Acts as a regulator of calcium-sensing receptor CASR in a seesaw manner: GPR68-mediated signaling inhibits CASR signaling in response to protons, while CASR inhibits GPR68 in presence of extracellular calcium. Also functions as a metastasis suppressor gene in prostate cancer. The sequence is that of G-protein coupled receptor 68 from Mus musculus (Mouse).